We begin with the raw amino-acid sequence, 1444 residues long: DNA polymerase III PolC-type (1444 aa).

The Exonuclease domain maps to 421-577; it reads YVVFDVETTG…ADAEATGYLL (157 aa).

Belongs to the DNA polymerase type-C family. PolC subfamily.

The protein localises to the cytoplasm. It catalyses the reaction DNA(n) + a 2'-deoxyribonucleoside 5'-triphosphate = DNA(n+1) + diphosphate. Functionally, required for replicative DNA synthesis. This DNA polymerase also exhibits 3' to 5' exonuclease activity. In Lacticaseibacillus paracasei (strain ATCC 334 / BCRC 17002 / CCUG 31169 / CIP 107868 / KCTC 3260 / NRRL B-441) (Lactobacillus paracasei), this protein is DNA polymerase III PolC-type.